The chain runs to 91 residues: uncharacterized protein (91 aa).

A helical transmembrane segment spans residues 7–23 (IALVGVVVVLFGALRYQ).

The protein resides in the membrane. This is an uncharacterized protein from Haemophilus influenzae (strain ATCC 51907 / DSM 11121 / KW20 / Rd).